Here is a 221-residue protein sequence, read N- to C-terminus: Thiamine-phosphate synthase (221 aa).

4-amino-2-methyl-5-(diphosphooxymethyl)pyrimidine-binding positions include Gln44 to Lys48 and Asn79. Positions 80 and 99 each coordinate Mg(2+). Ser117 is a 4-amino-2-methyl-5-(diphosphooxymethyl)pyrimidine binding site. Thr143–Ser145 lines the 2-[(2R,5Z)-2-carboxy-4-methylthiazol-5(2H)-ylidene]ethyl phosphate pocket. Lys146 contributes to the 4-amino-2-methyl-5-(diphosphooxymethyl)pyrimidine binding site. 2-[(2R,5Z)-2-carboxy-4-methylthiazol-5(2H)-ylidene]ethyl phosphate-binding positions include Gly175 and Ile195–Ser196.

This sequence belongs to the thiamine-phosphate synthase family. Requires Mg(2+) as cofactor.

The catalysed reaction is 2-[(2R,5Z)-2-carboxy-4-methylthiazol-5(2H)-ylidene]ethyl phosphate + 4-amino-2-methyl-5-(diphosphooxymethyl)pyrimidine + 2 H(+) = thiamine phosphate + CO2 + diphosphate. The enzyme catalyses 2-(2-carboxy-4-methylthiazol-5-yl)ethyl phosphate + 4-amino-2-methyl-5-(diphosphooxymethyl)pyrimidine + 2 H(+) = thiamine phosphate + CO2 + diphosphate. It catalyses the reaction 4-methyl-5-(2-phosphooxyethyl)-thiazole + 4-amino-2-methyl-5-(diphosphooxymethyl)pyrimidine + H(+) = thiamine phosphate + diphosphate. Its pathway is cofactor biosynthesis; thiamine diphosphate biosynthesis; thiamine phosphate from 4-amino-2-methyl-5-diphosphomethylpyrimidine and 4-methyl-5-(2-phosphoethyl)-thiazole: step 1/1. Condenses 4-methyl-5-(beta-hydroxyethyl)thiazole monophosphate (THZ-P) and 2-methyl-4-amino-5-hydroxymethyl pyrimidine pyrophosphate (HMP-PP) to form thiamine monophosphate (TMP). The protein is Thiamine-phosphate synthase of Geobacillus thermodenitrificans (strain NG80-2).